Consider the following 836-residue polypeptide: MAMSCKDGKLGCLDNGKYVRYTPEQVEALERLYHDCPKPSSIRRQQLIRECPILSNIEPKQIKVWFQNRRCREKQRKEASRLQAVNRKLTAMNKLLMEENDRLQKQVSQLVHENSYFRQHTPNPSLPAKDTSCESVVTSGQHQLASQNPQRDASPAGLLSIAEETLAEFLSKATGTAVEWVQMPGMKPGPDSIGIIAISHGCTGVAARACGLVGLEPTRVAEIVKDRPSWFRECRAVEVMNVLPTANGGTVELLYMQLYAPTTLAPPRDFWLLRYTSVLEDGSLVVCERSLKSTQNGPSMPLVQNFVRAEMLSSGYLIRPCDGGGSIIHIVDHMDLEACSVPEVLRPLYESPKVLAQKTTMAALRQLKQIAQEVTQTNSSVNGWGRRPAALRALSQRLSRGFNEAVNGFTDEGWSVIGDSMDDVTITVNSSPDKLMGLNLTFANGFAPVSNVVLCAKASMLLQNVPPAILLRFLREHRSEWADNNIDAYLAAAVKVGPCSARVGGFGGQVILPLAHTIEHEEFMEVIKLEGLGHSPEDAIVPRDIFLLQLCSGMDENAVGTCAELIFAPIDASFADDAPLLPSGFRIIPLDSAKEVSSPNRTLDLASALEIGSAGTKASTDQSGNSTCARSVMTIAFEFGIESHMQEHVASMARQYVRGIISSVQRVALALSPSHISSQVGLRTPLGTPEAQTLARWICQSYRGYMGVELLKSNSDGNESILKNLWHHTDAIICCSMKALPVFTFANQAGLDMLETTLVALQDISLEKIFDDNGRKTLCSEFPQIMQQGFACLQGGICLSSMGRPVSYERAVAWKVLNEEENAHCICFVFINWSFV.

The homeobox DNA-binding region spans 14–77; it reads DNGKYVRYTP…NRRCREKQRK (64 aa). Residues 72 to 115 are a coiled coil; sequence REKQRKEASRLQAVNRKLTAMNKLLMEENDRLQKQVSQLVHENS. Residues 151–379 form the START domain; that stretch reads RDASPAGLLS…IAQEVTQTNS (229 aa).

It belongs to the HD-ZIP homeobox family. Class III subfamily. Interacts with ESR1 and ESR2. Interacts with ZPR3. Highly expressed the developing vascular elements and the adaxial portion of cotyledons. Expressed in developing ovules, stamens and carpels. Expressed in procambium and shoot meristem.

The protein resides in the nucleus. Probable transcription factor involved in the regulation of meristem development to promote lateral organ formation. May regulates procambial and vascular tissue formation or maintenance, and vascular development in inflorescence stems. This chain is Homeobox-leucine zipper protein ATHB-15 (ATHB-15), found in Arabidopsis thaliana (Mouse-ear cress).